Here is a 317-residue protein sequence, read N- to C-terminus: N-acetylmuramoyl-L-alanine amidase XlyB (317 aa).

The signal sequence occupies residues 1 to 39; sequence MSIPVKKNLVSEAKYALKCPNAMSAEYITIHNTANDASA. Positions 40-142 constitute an N-acetylmuramoyl-L-alanine amidase domain; that stretch reads ANEISYMIGN…QDWSGKYCPH (103 aa). In terms of domain architecture, LysM spans 177–221; sequence SEYHVKKGDTLSGIAASHGASVKTLQSINHITDPNHIKIGQVIKL.

It belongs to the N-acetylmuramoyl-L-alanine amidase 2 family.

It is found in the secreted. The enzyme catalyses Hydrolyzes the link between N-acetylmuramoyl residues and L-amino acid residues in certain cell-wall glycopeptides.. Functionally, autolysins are involved in some important biological processes such as cell separation, cell-wall turnover, competence for genetic transformation, formation of the flagella and sporulation. This is N-acetylmuramoyl-L-alanine amidase XlyB (xlyB) from Bacillus subtilis (strain 168).